We begin with the raw amino-acid sequence, 340 residues long: Ketol-acid reductoisomerase (NADP(+)) (340 aa).

The region spanning 1 to 182 is the KARI N-terminal Rossmann domain; that stretch reads MRVYYDRDCD…GGGRSGIIET (182 aa). NADP(+) is bound by residues 24 to 27, Arg48, Ser51, Ser53, and 83 to 86; these read YGSQ and DELQ. Residue His108 is part of the active site. Gly134 serves as a coordination point for NADP(+). The KARI C-terminal knotted domain occupies 183 to 329; sequence NFREECETDL…ETLRGMMPWI (147 aa). Mg(2+) is bound by residues Asp191, Glu195, Glu227, and Glu231. Residue Ser252 coordinates substrate.

Belongs to the ketol-acid reductoisomerase family. Mg(2+) is required as a cofactor.

The catalysed reaction is (2R)-2,3-dihydroxy-3-methylbutanoate + NADP(+) = (2S)-2-acetolactate + NADPH + H(+). The enzyme catalyses (2R,3R)-2,3-dihydroxy-3-methylpentanoate + NADP(+) = (S)-2-ethyl-2-hydroxy-3-oxobutanoate + NADPH + H(+). It functions in the pathway amino-acid biosynthesis; L-isoleucine biosynthesis; L-isoleucine from 2-oxobutanoate: step 2/4. The protein operates within amino-acid biosynthesis; L-valine biosynthesis; L-valine from pyruvate: step 2/4. Functionally, involved in the biosynthesis of branched-chain amino acids (BCAA). Catalyzes an alkyl-migration followed by a ketol-acid reduction of (S)-2-acetolactate (S2AL) to yield (R)-2,3-dihydroxy-isovalerate. In the isomerase reaction, S2AL is rearranged via a Mg-dependent methyl migration to produce 3-hydroxy-3-methyl-2-ketobutyrate (HMKB). In the reductase reaction, this 2-ketoacid undergoes a metal-dependent reduction by NADPH to yield (R)-2,3-dihydroxy-isovalerate. This chain is Ketol-acid reductoisomerase (NADP(+)), found in Jannaschia sp. (strain CCS1).